The sequence spans 225 residues: Ras-related protein Rab-32 (225 aa).

N-acetylalanine is present on Ala2. GTP contacts are provided by Val36, Gly37, Lys38, Thr39, Ser40, Ser51, Gln52, Tyr54, and Thr57. Thr39 is a binding site for Mg(2+). The Switch 1 signature appears at 48 to 62; that stretch reads QLFSQHYRATIGVDF. Residue Thr57 participates in Mg(2+) binding. Ser71 is modified (phosphoserine). Residue Asp81 participates in Mg(2+) binding. GTP is bound by residues Gly84, Asn143, Lys144, Asp146, Ala175, and Lys176. The Switch 2 signature appears at 84–97; sequence GQERFGNMTRVYYK. Positions 178–197 are PKA-RII subunit binding domain; it reads NINIEEAARFLVEKILVNHQ. 2 S-geranylgeranyl cysteine lipidation sites follow: Cys224 and Cys225.

This sequence belongs to the small GTPase superfamily. Rab family. As to quaternary structure, interacts with ANKRD27. A decreased interaction with ANKRD27 seen in the presence of SGSM2. Interacts with LRRK2 (via N-terminus); this interaction results in stimulation of RAB10 phosphorylation by LRRK2. Mg(2+) serves as cofactor. Widely expressed with high levels in heart, liver, kidney, bone marrow, testis, colon and fetal lung.

The protein resides in the mitochondrion. The protein localises to the mitochondrion outer membrane. Its subcellular location is the cytoplasmic vesicle. It is found in the phagosome. It localises to the phagosome membrane. The protein resides in the melanosome. The protein localises to the melanosome membrane. It carries out the reaction GTP + H2O = GDP + phosphate + H(+). With respect to regulation, regulated by guanine the nucleotide exchange factor (GEF) BLOC-3 complex composed of HPS1 and HPS4 which promote the exchange of bound GDP for free GTP. Regulated by the GTPase activating protein (GAP) SGSM2/RUTBC1 which increases the GTP hydrolysis activity. Inhibited by GDP dissociation inhibitors (GDIs) which prevent Rab-GDP dissociation. Its function is as follows. The small GTPases Rab are key regulators of intracellular membrane trafficking, from the formation of transport vesicles to their fusion with membranes. Rabs cycle between an inactive GDP-bound form and an active GTP-bound form that is able to recruit to membranes different set of downstream effectors directly responsible for vesicle formation, movement, tethering and fusion. Also acts as an A-kinase anchoring protein by binding to the type II regulatory subunit of protein kinase A and anchoring it to the mitochondrion. Also involved in synchronization of mitochondrial fission. Plays a role in the maturation of phagosomes that engulf pathogens, such as S.aureus and M.tuberculosis. Plays an important role in the control of melanin production and melanosome biogenesis. In concert with RAB38, regulates the proper trafficking of melanogenic enzymes TYR, TYRP1 and DCT/TYRP2 to melanosomes in melanocytes. Stimulates phosphorylation of RAB10 'Thr-73' by LRRK2. The chain is Ras-related protein Rab-32 from Homo sapiens (Human).